Reading from the N-terminus, the 301-residue chain is UDP-N-acetylenolpyruvoylglucosamine reductase (301 aa).

The FAD-binding PCMH-type domain occupies 27–194 (RVGGPADVVF…LDAIFEGTPD (168 aa)). Arg-172 is an active-site residue. Ser-223 functions as the Proton donor in the catalytic mechanism. Residue Glu-293 is part of the active site.

It belongs to the MurB family. FAD serves as cofactor.

It localises to the cytoplasm. It carries out the reaction UDP-N-acetyl-alpha-D-muramate + NADP(+) = UDP-N-acetyl-3-O-(1-carboxyvinyl)-alpha-D-glucosamine + NADPH + H(+). It participates in cell wall biogenesis; peptidoglycan biosynthesis. Functionally, cell wall formation. The protein is UDP-N-acetylenolpyruvoylglucosamine reductase of Caulobacter vibrioides (strain NA1000 / CB15N) (Caulobacter crescentus).